Consider the following 190-residue polypeptide: dCTP deaminase (190 aa).

DCTP contacts are provided by residues 111-116 (KSTYAR), 135-137 (TLE), glutamine 156, tyrosine 172, and glutamine 182. The Proton donor/acceptor role is filled by glutamate 137.

Belongs to the dCTP deaminase family. Homotrimer.

The catalysed reaction is dCTP + H2O + H(+) = dUTP + NH4(+). The protein operates within pyrimidine metabolism; dUMP biosynthesis; dUMP from dCTP (dUTP route): step 1/2. Its function is as follows. Catalyzes the deamination of dCTP to dUTP. This Stenotrophomonas maltophilia (strain K279a) protein is dCTP deaminase.